The primary structure comprises 286 residues: Putative L-ribulose-5-phosphate 3-epimerase SgbU (286 aa).

It belongs to the L-ribulose-5-phosphate 3-epimerase family.

It carries out the reaction L-ribulose 5-phosphate = L-xylulose 5-phosphate. Catalyzes the isomerization of L-xylulose-5-phosphate to L-ribulose-5-phosphate. The protein is Putative L-ribulose-5-phosphate 3-epimerase SgbU (sgbU) of Haemophilus influenzae (strain ATCC 51907 / DSM 11121 / KW20 / Rd).